The primary structure comprises 34 residues: Antimicrobial peptide Alo-1 (34 aa).

Disulfide bonds link Cys1–Cys18, Cys8–Cys22, and Cys17–Cys33.

The protein localises to the secreted. Has antifungal activity against C.glabrata. This is Antimicrobial peptide Alo-1 from Acrocinus longimanus (Giant harlequin beetle).